Reading from the N-terminus, the 523-residue chain is Putative UDP-glucuronosyltransferase ugt-50 (523 aa).

Positions 1-25 (MHYSQMRWMFFCLTALLHGSFIVNA) are cleaved as a signal peptide. N-linked (GlcNAc...) asparagine glycans are attached at residues asparagine 84, asparagine 248, asparagine 283, and asparagine 487. The chain crosses the membrane as a helical span at residues 490–508 (IIEHNHLDLFFYLCIISLL).

This sequence belongs to the UDP-glycosyltransferase family.

The protein resides in the membrane. It catalyses the reaction glucuronate acceptor + UDP-alpha-D-glucuronate = acceptor beta-D-glucuronoside + UDP + H(+). In Caenorhabditis elegans, this protein is Putative UDP-glucuronosyltransferase ugt-50 (ugt-50).